We begin with the raw amino-acid sequence, 178 residues long: Endothelin-2 (178 aa).

Positions 1–24 (MVAVPTAWCSVALALLLALQEGKG) are cleaved as a signal peptide. Residues 25–46 (QVAAAPDHPAPSPRARGSHLRP) constitute a propeptide that is removed on maturation. Cystine bridges form between C49–C63 and C51–C59. The propeptide occupies 70-178 (VNTPGQTAPY…RPMYPRRRKT (109 aa)). Positions 96 to 111 (CECSSSGDPACATFCH) are endothelin-like. The segment at 158–178 (ARQHQEAEREPRPMYPRRRKT) is disordered. Residues 160-169 (QHQEAEREPR) are compositionally biased toward basic and acidic residues.

This sequence belongs to the endothelin/sarafotoxin family.

Its subcellular location is the secreted. Endothelins are endothelium-derived vasoconstrictor peptides. This Mustela putorius furo (European domestic ferret) protein is Endothelin-2 (EDN2).